A 524-amino-acid chain; its full sequence is MFSLQDLCRKHLFILPDVFGEHVLQQLGLYWKRHGSLQRIGDDHILIRRDLILSTNEALKMAGEEGNNEVVKLLLLWEGNLHYAIIGALQGDQYDLIHKYENQIEDYHHILPLIQDAKTFEKCHALERFCDVPCLLEHATKHNMLPILQKYQEELSIRVYLRETLFELACLWQRYDVLKWIEQTMHVYDLKIMFNIAISKRDLSMYSLGYVLLFDRGNIEATFLTQHLEKTAAKGLLHFVLETLKYGGNLNIVLSQAVKYNHRKLLDYFLRQLPRKNIEKLLLLAVQEKASKKTLNLLLSHLNYSVKHIKKLLRYVIEYESTLVIKLLLKKRVNLIDAVLEKNVRYFSAIKVRTIMDELSISPERVIKMAIQKMRTDIVIQTSYIWEDDLERLIRLKNMVYTIKYEHGKKMLIKVIHGIYKNLLYGEKEKVMFHLAKLYVAQNAATQFRDICKDCCKLDVARFKPRFKQLILDCLEMVTKKSCFSIIEILENYIISLFVMKVITEEEKNLCLELLYKVISYKTI.

The protein belongs to the asfivirus MGF 505 family.

Functionally, plays a role in virus cell tropism, and may be required for efficient virus replication in macrophages. This is Protein MGF 505-2R from Ornithodoros (relapsing fever ticks).